A 555-amino-acid polypeptide reads, in one-letter code: MQSCESSGDSADDPLSRGLRRRGQPRVVVIGAGLAGLAAAKALLEQGFTDVTVLEASSHIGGRVQSVKLGHATFELGATWIHGSHGNPIYHLAEANGLLEETTDGERSVGRISLYSKNGVACYLTNHGRRIPKDVVEEFSDLYNEVYNLTQEFFRHDKPVNAESQNSVGVFTREEVRNRIRNDPDDPEATKRLKLAMIQQYLKVESCESSSHSMDEVSLSAFGEWTEIPGAHHIIPSGFMRVVELLAEGIPAHVIQLGKPVRCIHWDQASARPRGPEIEPRGEGDHNHDTGEGGQGGEEPRGGRWDEDEQWSVVVECEDCELIPADHVIVTVSLGVLKRQYTSFFRPGLPTEKVAAIHRLGIGTTDKIFLEFEEPFWGPECNSLQFVWEDEAESHTLTYPPELWYRKICGFDVLYPPERYGHVLSGWICGEEALVMEKCDDEAVAEICTEMLRQFTGNPNIPKPRRILRSAWGSNPYFRGSYSYTQVGSSGADVEKLAKPLPYTESSKTAPMQVLFSGEATHRKYYSTTHGALLSGQREAARLIEMYRDLFQQGT.

FAD is bound by residues alanine 35, glutamate 55, arginine 63, 79–80 (TW), and valine 261. The interval 271-306 (ARPRGPEIEPRGEGDHNHDTGEGGQGGEEPRGGRWD) is disordered. The segment covering 274–291 (RGPEIEPRGEGDHNHDTG) has biased composition (basic and acidic residues). FAD contacts are provided by residues glutamate 519 and 528–529 (TT).

The protein belongs to the flavin monoamine oxidase family. It depends on FAD as a cofactor. In terms of tissue distribution, widely expressed. Expressed in human tumor cell lines. Isoform 4 is only found in an embryonal kidney cell line.

It is found in the cytoplasm. Its subcellular location is the nucleus. It catalyses the reaction spermine + O2 + H2O = 3-aminopropanal + spermidine + H2O2. It participates in amine and polyamine degradation; spermine degradation. Its activity is regulated as follows. Inhibited at more than 90% by SL-11144, SL-11150 and SL-11158, at concentrations less than 1 uM. Functionally, flavoenzyme which catalyzes the oxidation of spermine to spermidine. Can also use N(1)-acetylspermine and spermidine as substrates, with different affinity depending on the isoform (isozyme) and on the experimental conditions. Plays an important role in the regulation of polyamine intracellular concentration and has the potential to act as a determinant of cellular sensitivity to the antitumor polyamine analogs. May contribute to beta-alanine production via aldehyde dehydrogenase conversion of 3-amino-propanal. This is Spermine oxidase (SMOX) from Homo sapiens (Human).